A 579-amino-acid chain; its full sequence is MSETLATDATTPAEKKDFIRQIVREDLASGKHTVIRTRFPPEPNGYLHIGHAKAICLDFGLAAEFGGLCNLRLDDTNPAKEDPEFAAAIQDDVRWLGYDWAQLRHASDYFEVYYLAAQKLIRDGHAFVCDLSAEQVRQYRGTLTEPGRHSPFRERSVEENLDLFQRMRAGEFPDGARTLRAKIDMASGNINLRDPALYRIKHVEHQNTGNAWPIYPMYDFAHSLGDAVEGITHSLCTLEFEDHRPLYDWCVDKVDLVGHPELLQPLLDKGLPREAAKPRQIEFSRLNINYTVMSKRKLTALVEEQLVDGWDDPRMYTLQGLRRRGYTPAAMRLFVERVGISKQNSLIDFSVLEGCLREDLDAAAARRMAVIDPLKLVLTNLPEGHTETLQFSNHPKDESFGTREVPFARVLWIEREDFAEVPPKGWKRLVPGGEIRLRGAGIARVDEVIKNADGDIVALRGWLDPESRPGMEGANRKVKGTIHWVSAAHAVEAEIRLYDRLFSVEKPDDESEGKTYRDYLNPESKRNVRGYVEPSAALAAPEQAFQFERTGYFVADSRDHSASTPVFNRSVTLRDAWAK.

Residues 41 to 51 (PEPNGYLHIGH) carry the 'HIGH' region motif. ATP contacts are provided by residues 42–44 (EPN) and 48–54 (HIGHAKA). L-glutamine-binding residues include D74 and Y218. ATP contacts are provided by residues T237, 285–286 (RL), and 293–295 (MSK). The 'KMSKS' region motif lies at 292-296 (VMSKR).

This sequence belongs to the class-I aminoacyl-tRNA synthetase family. Monomer.

The protein localises to the cytoplasm. The enzyme catalyses tRNA(Gln) + L-glutamine + ATP = L-glutaminyl-tRNA(Gln) + AMP + diphosphate. The sequence is that of Glutamine--tRNA ligase from Xanthomonas oryzae pv. oryzae (strain MAFF 311018).